A 223-amino-acid polypeptide reads, in one-letter code: Ribose-5-phosphate isomerase A (223 aa).

Substrate-binding positions include 26-29 (TGST), 82-85 (DGAD), and 95-98 (KGGG). Glu104 serves as the catalytic Proton acceptor. Residue Lys122 coordinates substrate.

Belongs to the ribose 5-phosphate isomerase family. As to quaternary structure, homodimer.

The enzyme catalyses aldehydo-D-ribose 5-phosphate = D-ribulose 5-phosphate. Its pathway is carbohydrate degradation; pentose phosphate pathway; D-ribose 5-phosphate from D-ribulose 5-phosphate (non-oxidative stage): step 1/1. In terms of biological role, catalyzes the reversible conversion of ribose-5-phosphate to ribulose 5-phosphate. The chain is Ribose-5-phosphate isomerase A from Streptococcus agalactiae serotype V (strain ATCC BAA-611 / 2603 V/R).